The sequence spans 428 residues: Glutamate-1-semialdehyde 2,1-aminomutase (428 aa).

Lys265 bears the N6-(pyridoxal phosphate)lysine mark.

The protein belongs to the class-III pyridoxal-phosphate-dependent aminotransferase family. HemL subfamily. In terms of assembly, homodimer. Pyridoxal 5'-phosphate is required as a cofactor.

It localises to the cytoplasm. It carries out the reaction (S)-4-amino-5-oxopentanoate = 5-aminolevulinate. It participates in porphyrin-containing compound metabolism; protoporphyrin-IX biosynthesis; 5-aminolevulinate from L-glutamyl-tRNA(Glu): step 2/2. The polypeptide is Glutamate-1-semialdehyde 2,1-aminomutase (Shewanella sediminis (strain HAW-EB3)).